We begin with the raw amino-acid sequence, 680 residues long: MDFYNSYSQGFVRVAACTHHASIGDPTTNAASVLRLARQCHDDGVAVAVFPELTLSGYSIEDILLQDLLLEAVEDTVLDIVVASADLLPVLVIGAPLRYRHRIYNTAVIIHRGVVLGVAPKSYLPTYREFYERRQLAPGDDEHGTIGIGDLRAPFGPDLLFAAADLLGLVLHVEICEDMFVPVPPSAEAALAGATVLANLSGSPITIGRAEDRRLLARSASLRCLAAYVYAAAGEGESTTDLAWDGQTMIWENGVLLAESERFPKGEHRSVADVDTELLRSERLRMGTFNDNRRRHRALVEPFRRIEFRLEPPVGNIGLLREVERFPFVPADPQRLQQDCYEAYNIQVSGLEQRLRALDYPKVVIGVSGGLDSTHALIVAARAMDREGRPRSDILAFTLPGFVTGDRTKSNATELCRALGVTFTEIDIRDTATLMLKKIGHPFSRGEVSYDVTFENVQAGVRTDYLFRLANQHGGIVLGTGDLSELGLGWSTYGVGDQMSHYNINAGVPKTLVQHLIRWVIASSQFEEQVDKVLQSVLDTEITPELIPSDGEEKLQSTEAKVGPFALQDFSLFQVLRYGFRPSKIAFLTWHAWSDPNCGKWPPGFPEDKRLSYSLKEIRHWLQIFVQRFYSFSQFKRSALPNGPKVSHGGALSPRGDWRAPSDMSARIWLDEIEREVPEE.

The CN hydrolase domain maps to 12-276; the sequence is VRVAACTHHA…EHRSVADVDT (265 aa). The active-site Proton acceptor; for glutaminase activity is the glutamate 52. The active-site For glutaminase activity is lysine 121. Tyrosine 127 is a binding site for L-glutamine. The active-site Nucleophile; for glutaminase activity is cysteine 176. 2 residues coordinate L-glutamine: serine 203 and arginine 209. 366-373 lines the ATP pocket; that stretch reads GVSGGLDS. Asparagine 456 is a binding site for deamido-NAD(+). An ATP-binding site is contributed by threonine 480. Deamido-NAD(+)-binding positions include glutamate 485, 490–493, and lysine 636; that span reads WSTY.

This sequence in the C-terminal section; belongs to the NAD synthetase family.

It carries out the reaction deamido-NAD(+) + L-glutamine + ATP + H2O = L-glutamate + AMP + diphosphate + NAD(+) + H(+). It functions in the pathway cofactor biosynthesis; NAD(+) biosynthesis; NAD(+) from deamido-NAD(+) (L-Gln route): step 1/1. Its function is as follows. Catalyzes the ATP-dependent amidation of deamido-NAD to form NAD. Uses L-glutamine as a nitrogen source. The chain is Glutamine-dependent NAD(+) synthetase from Mycobacterium leprae (strain TN).